A 734-amino-acid chain; its full sequence is Probable inactive histone-lysine N-methyltransferase SUVR1 (734 aa).

Residues 61-163 are disordered; that stretch reads QSTEKNKKEE…LPPLKRYVRR (103 aa). Basic and acidic residues predominate over residues 62–81; that stretch reads STEKNKKEEEKKKKEEEKKS. A compositionally biased stretch (acidic residues) spans 98-109; it reads VQDEEDDMDEDE. Residues 113–122 are compositionally biased toward basic residues; it reads KRRLRSRRGR. The segment covering 123–132 has biased composition (low complexity); sequence ASSSSSSSSS. Residues cysteine 460, cysteine 464, cysteine 468, cysteine 477, cysteine 545, cysteine 549, cysteine 551, and cysteine 555 each contribute to the Zn(2+) site. Positions 460 to 563 constitute a Pre-SET domain; it reads CSTSCIEDCL…RCGNRVVQRG (104 aa). Residues 566 to 696 enclose the SET domain; that stretch reads NKLQVFFTPN…AMEELAWDYG (131 aa). Residues 577 to 579 and 652 to 653 contribute to the S-adenosyl-L-methionine site; these read KGW and NH. Zn(2+) is bound at residue cysteine 655. Tyrosine 695 provides a ligand contact to S-adenosyl-L-methionine. The 17-residue stretch at 707–723 folds into the Post-SET domain; the sequence is KPFDCLCGSRFCRNKKR. Zn(2+) contacts are provided by cysteine 711, cysteine 713, and cysteine 718.

It belongs to the class V-like SAM-binding methyltransferase superfamily. Histone-lysine methyltransferase family. As to quaternary structure, interacts with SUVR2 and itself.

Its subcellular location is the nucleus. The protein localises to the chromosome. Probable inactive histone-lysine methyltransferase that acts as regulator of transctiptional gene silencing independently of histone H3K9 methylation. Contributes to transcriptional gene silencing at RNA-directed DNA methylation (RdDM) target loci but also at RdDM-independent target loci. The sequence is that of Probable inactive histone-lysine N-methyltransferase SUVR1 (SUVR1) from Arabidopsis thaliana (Mouse-ear cress).